A 320-amino-acid polypeptide reads, in one-letter code: Serpentine receptor class delta-40 (320 aa).

7 helical membrane-spanning segments follow: residues 12-32, 42-62, 95-115, 133-153, 189-209, 243-263, and 273-293; these read IFYP…IYLI, MLKV…VVSC, YQVL…TFVF, IILL…IMVI, LINF…SFFF, AFLP…CILT, and FMTV…LYFV.

This sequence belongs to the nematode receptor-like protein srd family.

The protein resides in the membrane. The chain is Serpentine receptor class delta-40 (srd-40) from Caenorhabditis elegans.